Here is a 188-residue protein sequence, read N- to C-terminus: Accessory gene regulator protein B (188 aa).

4 consecutive transmembrane segments (helical) span residues 49–69 (VALI…YFLV), 100–122 (VYFQ…LIIY), 143–163 (LLSI…PEPF), and 164–184 (KQLI…IFFP).

It belongs to the AgrB family.

It localises to the cell membrane. Functionally, essential for the production of a quorum sensing system signal molecule, the autoinducing peptide (AIP). This quorum sensing system is responsible for the regulation of the expression of virulence factor genes. Involved in the proteolytic processing of AgrD, the precursor of AIP. This Staphylococcus haemolyticus (strain JCSC1435) protein is Accessory gene regulator protein B.